The sequence spans 80 residues: MTDFTPDAILDATGLNCPEPVMMLHTHVRNLAAGGLLKVIATDPSTRRDIPKFCNFLGHELLQQQEEAGTYLYWIRKKAD.

Cysteine 17 functions as the Cysteine persulfide intermediate in the catalytic mechanism.

This sequence belongs to the sulfur carrier protein TusA family.

The protein resides in the cytoplasm. In terms of biological role, sulfur carrier protein which probably makes part of a sulfur-relay system. This Pseudomonas putida (strain W619) protein is Sulfur carrier protein TusA.